We begin with the raw amino-acid sequence, 320 residues long: Ferrochelatase (320 aa).

2 residues coordinate Fe cation: His-194 and Glu-275.

It belongs to the ferrochelatase family. As to quaternary structure, monomer.

The protein localises to the cytoplasm. It catalyses the reaction heme b + 2 H(+) = protoporphyrin IX + Fe(2+). It participates in porphyrin-containing compound metabolism; protoheme biosynthesis; protoheme from protoporphyrin-IX: step 1/1. In terms of biological role, catalyzes the ferrous insertion into protoporphyrin IX. This is Ferrochelatase from Shigella boydii serotype 4 (strain Sb227).